We begin with the raw amino-acid sequence, 221 residues long: Large ribosomal subunit protein uL3 (221 aa).

This sequence belongs to the universal ribosomal protein uL3 family. As to quaternary structure, part of the 50S ribosomal subunit. Forms a cluster with proteins L14 and L19.

Functionally, one of the primary rRNA binding proteins, it binds directly near the 3'-end of the 23S rRNA, where it nucleates assembly of the 50S subunit. The protein is Large ribosomal subunit protein uL3 of Chlamydia felis (strain Fe/C-56) (Chlamydophila felis).